The sequence spans 60 residues: Mastoparan-VT6 (60 aa).

A signal peptide spans 1 to 27 (MKNTILILFTAFIALLGFFGMSAEALA). 4 AXPX repeats span residues 27 to 30 (ADPK), 31 to 34 (ADPL), 35 to 38 (AGPN), and 41 to 44 (ADPE). A propeptide spanning residues 28–45 (DPKADPLAGPNPDADPEA) is cleaved from the precursor. Leu-59 is modified (leucine amide).

This sequence belongs to the MCD family. Mastoparan subfamily. Expressed by the venom gland.

The protein resides in the secreted. Its function is as follows. The synthetic peptide shows antimicrobial activities against Gram-negative bacteria (but not against all strains tested), Gram-positive bacteria (all strains tested) and the fungi C.albicans and C.parapsilosis. Exhibits little hemolytic activity against washed human erythrocytes. In Vespa tropica (Greater banded hornet), this protein is Mastoparan-VT6.